The sequence spans 127 residues: PanD regulatory factor (127 aa).

One can recognise an N-acetyltransferase domain in the interval 1 to 127; that stretch reads MKLTIIRLEK…TAQQGGWEKC (127 aa). Interaction with PanD stretches follow at residues 43-48 and 66-76; these read RFNERL and LRVREVTRRRG. CoA contacts are provided by residues 66–68 and 72–79; these read LRV and TRRRGVGQ.

The protein belongs to the PanZ/PanM family. Interacts with PanD in the presence of CoA. Forms a heterooctameric complex composed of four PanD subunits and four PanZ subunits. Monomer in solution.

With respect to regulation, activation of PanD processing occurs even at low CoA concentrations. In contrast, full inhibition of PanD catalytic activity only occurs at sufficiently high CoA concentrations. Its function is as follows. Controls both the activation and catalytic activity of PanD in a coenzyme A (CoA)-dependent fashion. Binding of CoA or a derivative to PanZ leads to interaction with PanD, which promotes the processing and activation of pro-PanD, and subsequent substrate-mediated inhibition of the active form of PanD. Inhibition of PanD activity is probably the primary metabolic role of PanZ, allowing negative feedback regulation of pantothenate biosynthesis by CoA. The protein is PanD regulatory factor of Escherichia coli (strain K12).